Here is a 568-residue protein sequence, read N- to C-terminus: 4-hydroxy-7-methoxy-3-oxo-3,4-dihydro-2H-1,4-benzoxazin-2-yl glucoside beta-D-glucosidase, chloroplastic (568 aa).

A chloroplast-targeting transit peptide spans 1 to 50; it reads MALLVGGTLNPTTHLSLRSRAGRNSENVWLRSAASSQTSKGRFCNLTVRA. Residues Gln92, His194, and 239 to 240 each bind a beta-D-glucoside; that span reads NE. Residue Glu240 is the Proton donor of the active site. The cysteines at positions 259 and 265 are disulfide-linked. Residues Tyr383, Glu456, Trp504, 511-512, and Phe520 contribute to the a beta-D-glucoside site; that span reads EW. Residue Glu456 is the Nucleophile of the active site.

The protein belongs to the glycosyl hydrolase 1 family. As to quaternary structure, homohexamer. In terms of tissue distribution, expressed in seedlings, mesocotyl, coleoptile, leaf sheath, and roots.

Its subcellular location is the plastid. It localises to the chloroplast. The catalysed reaction is DIMBOA beta-D-glucoside + H2O = DIMBOA + D-glucose. It catalyses the reaction DIBOA beta-D-glucoside + H2O = DIBOA + D-glucose. The enzyme catalyses Hydrolysis of terminal, non-reducing beta-D-glucosyl residues with release of beta-D-glucose.. Its activity is regulated as follows. Inhibited by castanospermine, Ag(+) and Cu(2+). 34% inhibition by Zn(2+) and not affected by EDTA. In terms of biological role, involved in defense of young plant parts against pests via the production of benzoxazolinones (hydroxamic acids) from hydroxamic acid glucosides. The preferred substrate is DIBOA-beta-D-glucoside. Can also use esculin and genistein glucoside as substrates, but no activity with salicin, p-nitrophenyl-alpha-glucoside or substrates related to cell wall components. This is 4-hydroxy-7-methoxy-3-oxo-3,4-dihydro-2H-1,4-benzoxazin-2-yl glucoside beta-D-glucosidase, chloroplastic from Secale cereale (Rye).